A 255-amino-acid chain; its full sequence is Indole-3-glycerol phosphate synthase (255 aa).

This sequence belongs to the TrpC family.

It carries out the reaction 1-(2-carboxyphenylamino)-1-deoxy-D-ribulose 5-phosphate + H(+) = (1S,2R)-1-C-(indol-3-yl)glycerol 3-phosphate + CO2 + H2O. Its pathway is amino-acid biosynthesis; L-tryptophan biosynthesis; L-tryptophan from chorismate: step 4/5. This chain is Indole-3-glycerol phosphate synthase, found in Streptococcus pneumoniae serotype 19F (strain G54).